We begin with the raw amino-acid sequence, 379 residues long: Succinyl-diaminopimelate desuccinylase (379 aa).

Residue histidine 70 coordinates Zn(2+). Aspartate 72 is an active-site residue. Aspartate 103 lines the Zn(2+) pocket. Residue glutamate 137 is the Proton acceptor of the active site. 3 residues coordinate Zn(2+): glutamate 138, glutamate 166, and histidine 352.

It belongs to the peptidase M20A family. DapE subfamily. As to quaternary structure, homodimer. Zn(2+) serves as cofactor. Co(2+) is required as a cofactor.

The enzyme catalyses N-succinyl-(2S,6S)-2,6-diaminopimelate + H2O = (2S,6S)-2,6-diaminopimelate + succinate. It participates in amino-acid biosynthesis; L-lysine biosynthesis via DAP pathway; LL-2,6-diaminopimelate from (S)-tetrahydrodipicolinate (succinylase route): step 3/3. Functionally, catalyzes the hydrolysis of N-succinyl-L,L-diaminopimelic acid (SDAP), forming succinate and LL-2,6-diaminopimelate (DAP), an intermediate involved in the bacterial biosynthesis of lysine and meso-diaminopimelic acid, an essential component of bacterial cell walls. The polypeptide is Succinyl-diaminopimelate desuccinylase (Burkholderia multivorans (strain ATCC 17616 / 249)).